We begin with the raw amino-acid sequence, 599 residues long: Elongation factor 4 (599 aa).

Residues 2 to 184 (KNIRNFSIIA…RLVRDIPPPE (183 aa)) form the tr-type G domain. Residues 14–19 (DHGKST) and 131–134 (NKID) contribute to the GTP site.

It belongs to the TRAFAC class translation factor GTPase superfamily. Classic translation factor GTPase family. LepA subfamily.

It localises to the cell inner membrane. The enzyme catalyses GTP + H2O = GDP + phosphate + H(+). In terms of biological role, required for accurate and efficient protein synthesis under certain stress conditions. May act as a fidelity factor of the translation reaction, by catalyzing a one-codon backward translocation of tRNAs on improperly translocated ribosomes. Back-translocation proceeds from a post-translocation (POST) complex to a pre-translocation (PRE) complex, thus giving elongation factor G a second chance to translocate the tRNAs correctly. Binds to ribosomes in a GTP-dependent manner. The chain is Elongation factor 4 from Cronobacter sakazakii (strain ATCC BAA-894) (Enterobacter sakazakii).